A 288-amino-acid chain; its full sequence is Histone-lysine N-methyltransferase Suv4-20 (288 aa).

Residues 128–238 (QECKRYSQEG…PGDEITCFYG (111 aa)) enclose the SET domain.

It belongs to the class V-like SAM-binding methyltransferase superfamily. Histone-lysine methyltransferase family. Suvar4-20 subfamily.

It is found in the nucleus. The protein resides in the chromosome. The catalysed reaction is N(6)-methyl-L-lysyl(20)-[histone H4] + S-adenosyl-L-methionine = N(6),N(6)-dimethyl-L-lysyl(20)-[histone H4] + S-adenosyl-L-homocysteine + H(+). It catalyses the reaction N(6),N(6)-dimethyl-L-lysyl(20)-[histone H4] + S-adenosyl-L-methionine = N(6),N(6),N(6)-trimethyl-L-lysyl(20)-[histone H4] + S-adenosyl-L-homocysteine + H(+). Its function is as follows. Histone methyltransferase that specifically di- and trimethylates 'Lys-20' of histone H4 (H4K20me2/me3). H4 'Lys-20' trimethylation represents a specific tag for epigenetic transcriptional repression. Contributes to dosage compensation of X chromosome-relative to autosome-linked gene expression, possibly by converting H4K20me1 to H4K20m2/me3 on autosomes. Involved in the regulation of growth and body fat metabolism downstream of the TOR complex 2 pathway. The polypeptide is Histone-lysine N-methyltransferase Suv4-20 (set-4) (Caenorhabditis elegans).